We begin with the raw amino-acid sequence, 467 residues long: tRNA-2-methylthio-N(6)-dimethylallyladenosine synthase (467 aa).

One can recognise an MTTase N-terminal domain in the interval 5-125 (RKLHIKSYGC…LPQLLAQASR (121 aa)). Residues C14, C50, C88, C166, C170, and C173 each contribute to the [4Fe-4S] cluster site. Positions 152–384 (RARGVSAFVT…QSLIDSQQAA (233 aa)) constitute a Radical SAM core domain. One can recognise a TRAM domain in the interval 387 to 449 (KAAIGSVVDV…RYSLLGELVA (63 aa)).

This sequence belongs to the methylthiotransferase family. MiaB subfamily. Monomer. The cofactor is [4Fe-4S] cluster.

It is found in the cytoplasm. It carries out the reaction N(6)-dimethylallyladenosine(37) in tRNA + (sulfur carrier)-SH + AH2 + 2 S-adenosyl-L-methionine = 2-methylsulfanyl-N(6)-dimethylallyladenosine(37) in tRNA + (sulfur carrier)-H + 5'-deoxyadenosine + L-methionine + A + S-adenosyl-L-homocysteine + 2 H(+). Its function is as follows. Catalyzes the methylthiolation of N6-(dimethylallyl)adenosine (i(6)A), leading to the formation of 2-methylthio-N6-(dimethylallyl)adenosine (ms(2)i(6)A) at position 37 in tRNAs that read codons beginning with uridine. The chain is tRNA-2-methylthio-N(6)-dimethylallyladenosine synthase from Bradyrhizobium sp. (strain ORS 278).